A 304-amino-acid polypeptide reads, in one-letter code: Ferrochelatase (304 aa).

H169 and E241 together coordinate Fe cation.

It belongs to the ferrochelatase family.

The protein localises to the cytoplasm. The catalysed reaction is heme b + 2 H(+) = protoporphyrin IX + Fe(2+). The protein operates within porphyrin-containing compound metabolism; protoheme biosynthesis; protoheme from protoporphyrin-IX: step 1/1. Catalyzes the ferrous insertion into protoporphyrin IX. In Thermoplasma volcanium (strain ATCC 51530 / DSM 4299 / JCM 9571 / NBRC 15438 / GSS1), this protein is Ferrochelatase.